The primary structure comprises 34 residues: Colipase (34 aa).

Cystine bridges form between Cys12–Cys23 and Cys18–Cys34.

It belongs to the colipase family. As to quaternary structure, forms a 1:1 stoichiometric complex with pancreatic lipase. As to expression, expressed by the pancreas.

It is found in the secreted. In terms of biological role, colipase is a cofactor of pancreatic lipase. It allows the lipase to anchor itself to the lipid-water interface. Without colipase the enzyme is washed off by bile salts, which have an inhibitory effect on the lipase. The protein is Colipase (CLPS) of Gallus gallus (Chicken).